The chain runs to 151 residues: 3-hydroxyacyl-[acyl-carrier-protein] dehydratase FabZ (151 aa).

H56 is a catalytic residue.

This sequence belongs to the thioester dehydratase family. FabZ subfamily.

The protein resides in the cytoplasm. The enzyme catalyses a (3R)-hydroxyacyl-[ACP] = a (2E)-enoyl-[ACP] + H2O. In terms of biological role, involved in unsaturated fatty acids biosynthesis. Catalyzes the dehydration of short chain beta-hydroxyacyl-ACPs and long chain saturated and unsaturated beta-hydroxyacyl-ACPs. The protein is 3-hydroxyacyl-[acyl-carrier-protein] dehydratase FabZ of Rhodopseudomonas palustris (strain ATCC BAA-98 / CGA009).